We begin with the raw amino-acid sequence, 29 residues long: Cytochrome b6-f complex subunit 8 (29 aa).

Residues 3 to 23 (IVSLAWAALMIVFTFSLSLVV) form a helical membrane-spanning segment.

It belongs to the PetN family. As to quaternary structure, the 4 large subunits of the cytochrome b6-f complex are cytochrome b6, subunit IV (17 kDa polypeptide, PetD), cytochrome f and the Rieske protein, while the 4 small subunits are PetG, PetL, PetM and PetN. The complex functions as a dimer.

The protein resides in the plastid membrane. Its function is as follows. Component of the cytochrome b6-f complex, which mediates electron transfer between photosystem II (PSII) and photosystem I (PSI), cyclic electron flow around PSI, and state transitions. This Cuscuta exaltata (Tall dodder) protein is Cytochrome b6-f complex subunit 8.